Here is a 75-residue protein sequence, read N- to C-terminus: RNA-binding protein Hfq (75 aa).

Residues 9-69 enclose the Sm domain; sequence DQFLNQLRKE…ISTFAPERNI (61 aa).

Belongs to the Hfq family. Homohexamer.

Its function is as follows. RNA chaperone that binds small regulatory RNA (sRNAs) and mRNAs to facilitate mRNA translational regulation in response to envelope stress, environmental stress and changes in metabolite concentrations. Also binds with high specificity to tRNAs. This Geobacillus kaustophilus (strain HTA426) protein is RNA-binding protein Hfq.